The following is a 145-amino-acid chain: uncharacterized protein (145 aa).

Residues 1–41 (MEQHYHQQNQLRQLKQQQLKELLQQQSKDKEEDEQKHDDYR) are a coiled coil. A disordered region spans residues 1 to 91 (MEQHYHQQNQ…LQISEPEGES (91 aa)). Over residues 7–26 (QQNQLRQLKQQQLKELLQQQ) the composition is skewed to low complexity. Residues 27–42 (SKDKEEDEQKHDDYRS) are compositionally biased toward basic and acidic residues. A compositionally biased stretch (low complexity) spans 43-58 (PTKTTTTTATSTSAAT).

This is an uncharacterized protein from Dictyostelium discoideum (Social amoeba).